The sequence spans 274 residues: Rhamnulose-1-phosphate aldolase (274 aa).

Glutamate 117 is an active-site residue. Zn(2+)-binding residues include histidine 141, histidine 143, and histidine 212.

It belongs to the aldolase class II family. RhaD subfamily. Homotetramer. Requires Zn(2+) as cofactor.

It is found in the cytoplasm. The enzyme catalyses L-rhamnulose 1-phosphate = (S)-lactaldehyde + dihydroxyacetone phosphate. It functions in the pathway carbohydrate degradation; L-rhamnose degradation; glycerone phosphate from L-rhamnose: step 3/3. Functionally, catalyzes the reversible cleavage of L-rhamnulose-1-phosphate to dihydroxyacetone phosphate (DHAP) and L-lactaldehyde. This chain is Rhamnulose-1-phosphate aldolase, found in Yersinia pseudotuberculosis serotype I (strain IP32953).